The sequence spans 199 residues: Large ribosomal subunit protein uL13A (199 aa).

Serine 2 carries the post-translational modification N-acetylserine. Lysine 177 participates in a covalent cross-link: Glycyl lysine isopeptide (Lys-Gly) (interchain with G-Cter in ubiquitin).

It belongs to the universal ribosomal protein uL13 family. Component of the large ribosomal subunit (LSU). Mature yeast ribosomes consist of a small (40S) and a large (60S) subunit. The 40S small subunit contains 1 molecule of ribosomal RNA (18S rRNA) and 33 different proteins (encoded by 57 genes). The large 60S subunit contains 3 rRNA molecules (25S, 5.8S and 5S rRNA) and 46 different proteins (encoded by 81 genes). In terms of processing, N-terminally acetylated by acetyltransferase NatA.

It localises to the cytoplasm. Component of the ribosome, a large ribonucleoprotein complex responsible for the synthesis of proteins in the cell. The small ribosomal subunit (SSU) binds messenger RNAs (mRNAs) and translates the encoded message by selecting cognate aminoacyl-transfer RNA (tRNA) molecules. The large subunit (LSU) contains the ribosomal catalytic site termed the peptidyl transferase center (PTC), which catalyzes the formation of peptide bonds, thereby polymerizing the amino acids delivered by tRNAs into a polypeptide chain. The nascent polypeptides leave the ribosome through a tunnel in the LSU and interact with protein factors that function in enzymatic processing, targeting, and the membrane insertion of nascent chains at the exit of the ribosomal tunnel. The sequence is that of Large ribosomal subunit protein uL13A from Saccharomyces cerevisiae (strain ATCC 204508 / S288c) (Baker's yeast).